Here is a 497-residue protein sequence, read N- to C-terminus: Aldehyde dehydrogenase (497 aa).

NAD(+) is bound at residue 241 to 246; it reads GSTLVG. E264 functions as the Proton acceptor in the catalytic mechanism. The active-site Nucleophile is C298.

The protein belongs to the aldehyde dehydrogenase family.

The enzyme catalyses an aldehyde + NAD(+) + H2O = a carboxylate + NADH + 2 H(+). Its pathway is alcohol metabolism; ethanol degradation; acetate from ethanol: step 2/2. This is Aldehyde dehydrogenase (aldA) from Emericella nidulans (strain FGSC A4 / ATCC 38163 / CBS 112.46 / NRRL 194 / M139) (Aspergillus nidulans).